The sequence spans 310 residues: MKNKIVFTGSPDFAVESLQRLYDNPNNEIQLVISQEDKKRNRNKFSPTAVKKRAMELGIDVITPKNINDEEVFDLLDKLNPDFIVVVAYGQLIKKRILDRFKNKILNVHASILPKYRGASPINYSLLNGDKESGVSIMLVEQGLDTGDVLAVDKIKLDNEIMLEELHDKLMIMGADLINKVIDDYQKYFDSRKEQNENEASIVGKIHKSMGQINFNEKSDVIYNKFRGLTPWPGLFFKLEDKIIKVHNINIIKQYNDNKNGEVVKVDKNGIKVACEDGFIIITRLQLPNKKPLNISEYLNGNSFEEGIIL.

111–114 (SILP) serves as a coordination point for (6S)-5,6,7,8-tetrahydrofolate.

It belongs to the Fmt family.

The catalysed reaction is L-methionyl-tRNA(fMet) + (6R)-10-formyltetrahydrofolate = N-formyl-L-methionyl-tRNA(fMet) + (6S)-5,6,7,8-tetrahydrofolate + H(+). Functionally, attaches a formyl group to the free amino group of methionyl-tRNA(fMet). The formyl group appears to play a dual role in the initiator identity of N-formylmethionyl-tRNA by promoting its recognition by IF2 and preventing the misappropriation of this tRNA by the elongation apparatus. In Finegoldia magna (strain ATCC 29328 / DSM 20472 / WAL 2508) (Peptostreptococcus magnus), this protein is Methionyl-tRNA formyltransferase.